The chain runs to 486 residues: Arginine/agmatine antiporter (486 aa).

12 consecutive transmembrane segments (helical) span residues 12–32 (LGAI…GIFS), 41–61 (AGVG…FFIA), 85–105 (GFGP…QIFG), 132–152 (PAIL…LKGI), 160–180 (IIGT…TAFL), 211–231 (STML…VMSA), 242–262 (ATIL…ILPF), 296–316 (VGLL…VAEI), 341–361 (VSLY…YFST), 367–387 (MLSI…AFLV), 418–438 (IWLI…LLAL), and 461–481 (EVTE…LFST).

Belongs to the amino acid-polyamine-organocation (APC) superfamily. Basic amino acid/polyamine antiporter (APA) (TC 2.A.3.2) family.

The protein localises to the cell inner membrane. In terms of biological role, catalyzes the exchange of L-arginine for agmatine. The arginine uptake by the bacterium in the macrophage may be a virulence factor against the host innate immune response. This Chlamydia abortus (strain DSM 27085 / S26/3) (Chlamydophila abortus) protein is Arginine/agmatine antiporter (aaxC).